A 284-amino-acid polypeptide reads, in one-letter code: MGAEWLPVRKLGMVRGISPDSNLIRIDGISVRRGHRTVLHDVTASFPTAKVTAIVGPSGVGKTTMLGLLNGLIAPASGTVSFSEIGLLTEPTALRAARHQTATIFQDHALIGRLSAIDNVLLGLADTRHPLSPLPWPVAARQRAAKALDDVGLLDLATRRTAQLSGGERQRVGVARALIRRPKLLLGDEPFASVDPALAQQLGGLFRSLAMREGLTVILVLHQLQLARAIADRIIGLSDGRVAFDGPAAAFDADLEARIFPSLALSHDHSPPLSQPKETICSID.

The ABC transporter domain occupies 24-264 (IRIDGISVRR…LEARIFPSLA (241 aa)). 56–63 (GPSGVGKT) contacts ATP.

It belongs to the ABC transporter superfamily. Phosphonates importer (TC 3.A.1.9.1) family. The complex is composed of two ATP-binding proteins (PhnC), two transmembrane proteins (PhnE) and a solute-binding protein (PhnD).

It localises to the cell inner membrane. It catalyses the reaction phosphonate(out) + ATP + H2O = phosphonate(in) + ADP + phosphate + H(+). Functionally, part of the ABC transporter complex PhnCDE involved in phosphonates import. Responsible for energy coupling to the transport system. The polypeptide is Phosphonates import ATP-binding protein PhnC 2 (Rhodopseudomonas palustris (strain ATCC BAA-98 / CGA009)).